Here is a 1201-residue protein sequence, read N- to C-terminus: DNA-directed RNA polymerase subunit beta' (1201 aa).

Zn(2+) contacts are provided by cysteine 60, cysteine 62, cysteine 75, and cysteine 78. Residues aspartate 449, aspartate 451, and aspartate 453 each coordinate Mg(2+). Cysteine 818, cysteine 892, cysteine 899, and cysteine 902 together coordinate Zn(2+).

This sequence belongs to the RNA polymerase beta' chain family. The RNAP catalytic core consists of 2 alpha, 1 beta, 1 beta' and 1 omega subunit. When a sigma factor is associated with the core the holoenzyme is formed, which can initiate transcription. Mg(2+) is required as a cofactor. The cofactor is Zn(2+).

It catalyses the reaction RNA(n) + a ribonucleoside 5'-triphosphate = RNA(n+1) + diphosphate. DNA-dependent RNA polymerase catalyzes the transcription of DNA into RNA using the four ribonucleoside triphosphates as substrates. This is DNA-directed RNA polymerase subunit beta' from Listeria monocytogenes serovar 1/2a (strain ATCC BAA-679 / EGD-e).